Reading from the N-terminus, the 431-residue chain is Serine/threonine-protein kinase Sgk1 (431 aa).

The segment at Leu58 to Ala93 is disordered. Residues Gln81–Ala93 show a composition bias toward polar residues. The region spanning Phe98–Phe355 is the Protein kinase domain. ATP contacts are provided by residues Ile104–Val112 and Lys127. The active-site Proton acceptor is the Asp222. An AGC-kinase C-terminal domain is found at Ser356–Leu431.

Belongs to the protein kinase superfamily. AGC Ser/Thr protein kinase family.

It localises to the cytoplasm. It is found in the nucleus. The protein localises to the endoplasmic reticulum. It carries out the reaction L-seryl-[protein] + ATP = O-phospho-L-seryl-[protein] + ADP + H(+). The enzyme catalyses L-threonyl-[protein] + ATP = O-phospho-L-threonyl-[protein] + ADP + H(+). Its function is as follows. Protein kinase that may play an important role in cellular stress response. May be involved in the regulation of processes such as cell survival, neuronal excitability and renal sodium excretion. This Fundulus heteroclitus (Killifish) protein is Serine/threonine-protein kinase Sgk1 (sgk1).